Here is a 526-residue protein sequence, read N- to C-terminus: Variant surface glycoprotein MITAT 1.4A (526 aa).

A signal peptide spans 1 to 33 (MDCHTKETLGVTQWRRSTMLTLSLLYAITPADG). Cystine bridges form between Cys-47–Cys-173 and Cys-154–Cys-215. A disordered region spans residues 157–193 (NEGGDGDGKDQLAPKGCRHGTEADFDAGAGPAESEVA). N-linked (GlcNAc...) asparagine glycosylation is present at Asn-453. Asp-503 is lipidated: GPI-anchor amidated aspartate. Positions 504–526 (SSILVTKKFALTVVSAAFVALLF) are cleaved as a propeptide — removed in mature form.

The protein resides in the cell membrane. In terms of biological role, VSG forms a coat on the surface of the parasite. The trypanosome evades the immune response of the host by expressing a series of antigenically distinct VSGs from an estimated 1000 VSG genes. This is Variant surface glycoprotein MITAT 1.4A from Trypanosoma brucei brucei.